We begin with the raw amino-acid sequence, 75 residues long: Alpha-elapitoxin-Bc2b (75 aa).

The signal sequence occupies residues 1 to 2; it reads YT. 5 disulfides stabilise this stretch: C5-C24, C17-C45, C30-C34, C49-C60, and C61-C66.

Monomer in solution, homodimer in crystal state. As to expression, expressed by the venom gland.

The protein localises to the secreted. In terms of biological role, binds to muscular and neuronal nicotinic acetylcholine receptor (nAChR) and inhibits acetylcholine from binding to the receptor, thereby impairing neuromuscular and neuronal transmission. Blocks muscle type nAChR. Also binds with high affinity to alpha-7/CHRNA7 nAChRs. In addition, shows a weak inhibition of neuronal alpha-3-beta-2/CHRNA3-CHRNB2 nAChR. Selectively binds to alpha-1-delta subunit interface of the mouse muscle nicotinic acetylcholine receptor, with a 10-fold higher affinity for the adult than for the fetal receptors. In vivo, when intraperitoneally injected into mice, causes flaccid paralysis and respiratory distress, followed by death within 2-4 hours. The polypeptide is Alpha-elapitoxin-Bc2b (Bungarus candidus (Malayan krait)).